We begin with the raw amino-acid sequence, 785 residues long: Endonuclease MutS2 (785 aa).

Position 332 to 339 (332 to 339 (GPNTGGKT)) interacts with ATP. The Smr domain occupies 710-785 (IDLRGLDAEE…GDGATIVELK (76 aa)).

It belongs to the DNA mismatch repair MutS family. MutS2 subfamily. As to quaternary structure, homodimer. Binds to stalled ribosomes, contacting rRNA.

In terms of biological role, endonuclease that is involved in the suppression of homologous recombination and thus may have a key role in the control of bacterial genetic diversity. Its function is as follows. Acts as a ribosome collision sensor, splitting the ribosome into its 2 subunits. Detects stalled/collided 70S ribosomes which it binds and splits by an ATP-hydrolysis driven conformational change. Acts upstream of the ribosome quality control system (RQC), a ribosome-associated complex that mediates the extraction of incompletely synthesized nascent chains from stalled ribosomes and their subsequent degradation. Probably generates substrates for RQC. This chain is Endonuclease MutS2, found in Clostridium botulinum (strain Eklund 17B / Type B).